The primary structure comprises 97 residues: Co-chaperonin GroES (97 aa).

This sequence belongs to the GroES chaperonin family. As to quaternary structure, heptamer of 7 subunits arranged in a ring. Interacts with the chaperonin GroEL.

Its subcellular location is the cytoplasm. In terms of biological role, together with the chaperonin GroEL, plays an essential role in assisting protein folding. The GroEL-GroES system forms a nano-cage that allows encapsulation of the non-native substrate proteins and provides a physical environment optimized to promote and accelerate protein folding. GroES binds to the apical surface of the GroEL ring, thereby capping the opening of the GroEL channel. The polypeptide is Co-chaperonin GroES (Klebsiella pneumoniae subsp. pneumoniae (strain ATCC 700721 / MGH 78578)).